Here is a 179-residue protein sequence, read N- to C-terminus: ATP synthase subunit b (179 aa).

Residues V29 to G48 traverse the membrane as a helical segment.

It belongs to the ATPase B chain family. As to quaternary structure, F-type ATPases have 2 components, F(1) - the catalytic core - and F(0) - the membrane proton channel. F(1) has five subunits: alpha(3), beta(3), gamma(1), delta(1), epsilon(1). F(0) has four main subunits: a(1), b(1), b'(1) and c(10-14). The alpha and beta chains form an alternating ring which encloses part of the gamma chain. F(1) is attached to F(0) by a central stalk formed by the gamma and epsilon chains, while a peripheral stalk is formed by the delta, b and b' chains.

It localises to the cellular thylakoid membrane. F(1)F(0) ATP synthase produces ATP from ADP in the presence of a proton or sodium gradient. F-type ATPases consist of two structural domains, F(1) containing the extramembraneous catalytic core and F(0) containing the membrane proton channel, linked together by a central stalk and a peripheral stalk. During catalysis, ATP synthesis in the catalytic domain of F(1) is coupled via a rotary mechanism of the central stalk subunits to proton translocation. Functionally, component of the F(0) channel, it forms part of the peripheral stalk, linking F(1) to F(0). Its function is as follows. The complex from the organism is particularly stable to disruption and remains functional after 6 hrs at 55 degrees Celsius. The chain is ATP synthase subunit b from Thermosynechococcus vestitus (strain NIES-2133 / IAM M-273 / BP-1).